The primary structure comprises 238 residues: MSSNLANKLRVGTKKAHTMAENVGFVKCFLKGVVEKSSYRKLVANFYYVYSAMEEEMEKHSQHPIVSKINFSQLNRKQTLEQDLSYYYGANWREQIQLSPAGEAYVQRIREISATEPELLIAHSYTRYLGDLSGGQILKNIAVTAMNLNDGQGTAFYEFADISDEKAFKAKYRQTLDELAIDEATGDRIVDEANAAFGMNMKMFQELEGNLIKAIGMMLFNTLTRKRTRGATELATAE.

This sequence belongs to the heme oxygenase family.

The catalysed reaction is heme b + 3 reduced [NADPH--hemoprotein reductase] + 3 O2 = biliverdin IXalpha + CO + Fe(2+) + 3 oxidized [NADPH--hemoprotein reductase] + 3 H2O + H(+). In terms of biological role, catalyzes the opening of the heme ring with the release of iron. Key enzyme in the synthesis of the chromophoric part of the photosynthetic antennae. Upon overexpression in E.coli with PCB:ferredoxin oxidoreductase, CpeS and either CpcB or PecB permits synthesis of phycocyanin-coupled CpcB or PecB. In Nostoc sp. (strain PCC 7120 / SAG 25.82 / UTEX 2576), this protein is Heme oxygenase 1 (pbsA1).